Reading from the N-terminus, the 513-residue chain is Histidine ammonia-lyase (513 aa).

A cross-link (5-imidazolinone (Ala-Gly)) is located at residues 144–146; that stretch reads ASG. Ser145 is subject to 2,3-didehydroalanine (Ser).

The protein belongs to the PAL/histidase family. In terms of processing, contains an active site 4-methylidene-imidazol-5-one (MIO), which is formed autocatalytically by cyclization and dehydration of residues Ala-Ser-Gly.

The protein resides in the cytoplasm. The enzyme catalyses L-histidine = trans-urocanate + NH4(+). It participates in amino-acid degradation; L-histidine degradation into L-glutamate; N-formimidoyl-L-glutamate from L-histidine: step 1/3. The polypeptide is Histidine ammonia-lyase (Streptococcus gordonii (strain Challis / ATCC 35105 / BCRC 15272 / CH1 / DL1 / V288)).